Reading from the N-terminus, the 111-residue chain is Large ribosomal subunit protein bL20c (111 aa).

This sequence belongs to the bacterial ribosomal protein bL20 family.

It is found in the plastid. Its subcellular location is the chloroplast. Its function is as follows. Binds directly to 23S ribosomal RNA and is necessary for the in vitro assembly process of the 50S ribosomal subunit. It is not involved in the protein synthesizing functions of that subunit. The protein is Large ribosomal subunit protein bL20c of Ostreococcus tauri.